Here is a 197-residue protein sequence, read N- to C-terminus: HTH-type transcriptional regulator BetI (197 aa).

An HTH tetR-type domain is found at P8 to L68. The H-T-H motif DNA-binding region spans S31 to F50.

Its pathway is amine and polyamine biosynthesis; betaine biosynthesis via choline pathway [regulation]. Functionally, repressor involved in the biosynthesis of the osmoprotectant glycine betaine. It represses transcription of the choline transporter BetT and the genes of BetAB involved in the synthesis of glycine betaine. The chain is HTH-type transcriptional regulator BetI from Pseudomonas fluorescens (strain Pf0-1).